The sequence spans 355 residues: Dihydroorotate dehydrogenase (quinone) (355 aa).

FMN is bound by residues Ala68–Lys72 and Thr92. Substrate is bound at residue Lys72. Substrate is bound at residue Asn117–Phe121. Residues Asn154 and Asn190 each contribute to the FMN site. Residue Asn190 coordinates substrate. Ser193 (nucleophile) is an active-site residue. Residue Asn195 participates in substrate binding. Residues Lys232 and Thr260 each contribute to the FMN site. Asn261–Thr262 is a binding site for substrate. Residues Gly286, Gly315, and Tyr336 to Ser337 contribute to the FMN site.

It belongs to the dihydroorotate dehydrogenase family. Type 2 subfamily. Monomer. It depends on FMN as a cofactor.

It localises to the cell membrane. The enzyme catalyses (S)-dihydroorotate + a quinone = orotate + a quinol. Its pathway is pyrimidine metabolism; UMP biosynthesis via de novo pathway; orotate from (S)-dihydroorotate (quinone route): step 1/1. Functionally, catalyzes the conversion of dihydroorotate to orotate with quinone as electron acceptor. This is Dihydroorotate dehydrogenase (quinone) from Nocardioides sp. (strain ATCC BAA-499 / JS614).